The primary structure comprises 494 residues: Smoothelin-like protein 1 (494 aa).

Composition is skewed to basic and acidic residues over residues 1–10 (MEQKEGKLSE), 74–104 (DEVKVESQREAGGKEDAEAELKKEDGEKEET), 112–166 (TGRK…KATV), and 179–232 (TGQR…KEEA). The interval 1–348 (MEQKEGKLSE…ARPRGPRAQN (348 aa)) is disordered. Residues 123-145 (KEAEEKESTLASEKQKAEEKEAK) are a coiled coil. Over residues 233–255 (DAKEEAEDAEEAEPGSPSEEQEQ) the composition is skewed to acidic residues. Low complexity-rich tracts occupy residues 269-279 (PSSPEEWPESP) and 302-314 (SPSASESSPSDVP). The span at 324-335 (GEKKEKAPERRV) shows a compositional bias: basic and acidic residues. Phosphoserine is present on serine 336. Positions 378–484 (GGVKNMLLEW…YIQELYRSLV (107 aa)) constitute a Calponin-homology (CH) domain. Residues 476–494 (IQELYRSLVQKGLVKTKKK) are calmodulin-binding.

The protein belongs to the smoothelin family. As to quaternary structure, interacts with PPP1R12A. Maximal phosphorylation of Ser-336 correlates with maximal relaxation of aorta in response to acetylcholine. In terms of tissue distribution, expressed in striated muscles, specifically in type 2a fibers (at protein level).

The protein localises to the cytoplasm. It is found in the myofibril. It localises to the sarcomere. The protein resides in the i band. Its subcellular location is the m line. The protein localises to the nucleus. Functionally, plays a role in the regulation of contractile properties of both striated and smooth muscles. When unphosphorylated, may inhibit myosin dephosphorylation. Phosphorylation at Ser-299 reduces this inhibitory activity. This chain is Smoothelin-like protein 1 (SMTNL1), found in Homo sapiens (Human).